We begin with the raw amino-acid sequence, 467 residues long: ATP synthase subunit beta (467 aa).

Residue 150 to 157 (GGAGVGKT) coordinates ATP.

The protein belongs to the ATPase alpha/beta chains family. As to quaternary structure, F-type ATPases have 2 components, CF(1) - the catalytic core - and CF(0) - the membrane proton channel. CF(1) has five subunits: alpha(3), beta(3), gamma(1), delta(1), epsilon(1). CF(0) has three main subunits: a(1), b(2) and c(9-12). The alpha and beta chains form an alternating ring which encloses part of the gamma chain. CF(1) is attached to CF(0) by a central stalk formed by the gamma and epsilon chains, while a peripheral stalk is formed by the delta and b chains.

Its subcellular location is the cell inner membrane. The catalysed reaction is ATP + H2O + 4 H(+)(in) = ADP + phosphate + 5 H(+)(out). In terms of biological role, produces ATP from ADP in the presence of a proton gradient across the membrane. The catalytic sites are hosted primarily by the beta subunits. The protein is ATP synthase subunit beta of Aliivibrio salmonicida (strain LFI1238) (Vibrio salmonicida (strain LFI1238)).